The sequence spans 232 residues: Homeobox protein SAX-1 (232 aa).

Disordered regions lie at residues 1–64 (CLPD…SCAK), 122–150 (KQHP…RPAA), and 185–208 (LLGA…LCPS). Residues 65-124 (PRRARTAFTYEQLVALENKFRATRYLSVCERLNLALSLSLTETQVKIWFQNRRTKWKKQH) constitute a DNA-binding region (homeobox). Low complexity predominate over residues 126 to 142 (GADGAAAPAPPAAARCS).

Belongs to the NK-1 homeobox family. Transiently expressed in the birth zone of the whole spinal cord regardless of the axial level.

Its subcellular location is the nucleus. The chain is Homeobox protein SAX-1 (SAX1) from Gallus gallus (Chicken).